Reading from the N-terminus, the 333-residue chain is Ornithine carbamoyltransferase (333 aa).

Carbamoyl phosphate is bound by residues 57-60, R108, and 135-138; these read STRT and HPTQ. Residues N168, D232, and 236 to 237 each bind L-ornithine; that span reads SM. Residues 274-275 and R319 contribute to the carbamoyl phosphate site; that span reads CL.

This sequence belongs to the aspartate/ornithine carbamoyltransferase superfamily. OTCase family.

It is found in the cytoplasm. The enzyme catalyses carbamoyl phosphate + L-ornithine = L-citrulline + phosphate + H(+). The protein operates within amino-acid degradation; L-arginine degradation via ADI pathway; carbamoyl phosphate from L-arginine: step 2/2. Reversibly catalyzes the transfer of the carbamoyl group from carbamoyl phosphate (CP) to the N(epsilon) atom of ornithine (ORN) to produce L-citrulline. The sequence is that of Ornithine carbamoyltransferase from Pediococcus pentosaceus (strain ATCC 25745 / CCUG 21536 / LMG 10740 / 183-1w).